A 240-amino-acid polypeptide reads, in one-letter code: ATP-dependent dethiobiotin synthetase BioD (240 aa).

15-20 provides a ligand contact to ATP; that stretch reads EIGKTF. T19 is a Mg(2+) binding site. Residue K40 is part of the active site. ATP-binding positions include D57, 118-121, and 178-179; these read EGVG and NR. Mg(2+)-binding residues include D57 and E118.

It belongs to the dethiobiotin synthetase family. In terms of assembly, homodimer. Mg(2+) serves as cofactor.

The protein resides in the cytoplasm. It catalyses the reaction (7R,8S)-7,8-diammoniononanoate + CO2 + ATP = (4R,5S)-dethiobiotin + ADP + phosphate + 3 H(+). The protein operates within cofactor biosynthesis; biotin biosynthesis; biotin from 7,8-diaminononanoate: step 1/2. Its function is as follows. Catalyzes a mechanistically unusual reaction, the ATP-dependent insertion of CO2 between the N7 and N8 nitrogen atoms of 7,8-diaminopelargonic acid (DAPA, also called 7,8-diammoniononanoate) to form a ureido ring. This chain is ATP-dependent dethiobiotin synthetase BioD, found in Burkholderia pseudomallei (strain 1106a).